A 249-amino-acid polypeptide reads, in one-letter code: MFQVAGLIVFCGLLAQTTALLEALPLGKALPLALDQSPTDLVGSLTSTLSNGLLSEGVLGILGNLPLLDILKAGGNTPSGLLGGLLGKLSSTIPLLNDIVDLQITDPQLLELGLVQSPDGHRLYVTIPLSLVLNVKTSVVGSLLKLAVKLNITVELLAVKDEQGKSHLVLGDCTHSPGSLKISLLDGLGPLVPQDLLDSITGVLDNVLPGLVQGEVCPLVNEVLSHLDVTLVHSIVDALIQGQEFVIKV.

Residues 1-15 (MFQVAGLIVFCGLLA) form the signal peptide. Positions 81 to 86 (LLGGLL) are important for surfactant activity and antibacterial properties. N-linked (GlcNAc...) asparagine glycosylation occurs at N151. An intrachain disulfide couples C173 to C217.

Belongs to the BPI/LBP/Plunc superfamily. Plunc family. As to quaternary structure, monomer. Interacts (via N-terminus) with SCNN1B, a subunit of the heterotrimeric epithelial sodium channel (ENaC); this inhibits proteolytic activation of ENaC. As to expression, expressed in lung and trachea.

Its subcellular location is the secreted. Functionally, lipid-binding protein which shows high specificity for the surfactant phospholipid dipalmitoylphosphatidylcholine (DPPC). Plays a role in the innate immune responses of the upper airways. Reduces the surface tension in secretions from airway epithelia and inhibits the formation of biofilm by pathogenic Gram-negative bacteria, such as P.aeruginosa and K.pneumoniae. Negatively regulates proteolytic cleavage of SCNN1G, an event that is required for activation of the epithelial sodium channel (ENaC), and thereby contributes to airway surface liquid homeostasis and proper clearance of mucus. Plays a role in the airway inflammatory response after exposure to irritants. May attract macrophages and neutrophils. The chain is BPI fold-containing family A member 1 (BPIFA1) from Sus scrofa (Pig).